We begin with the raw amino-acid sequence, 149 residues long: Transcriptional repressor NrdR (149 aa).

A zinc finger lies at 3-34 (CPFCSATDTKVIDSRLVADGHQVRRRRECVQC). The region spanning 49 to 139 (PRVVKQDGSR…VYRAFEDVSE (91 aa)) is the ATP-cone domain.

The protein belongs to the NrdR family. It depends on Zn(2+) as a cofactor.

In terms of biological role, negatively regulates transcription of bacterial ribonucleotide reductase nrd genes and operons by binding to NrdR-boxes. In Shewanella piezotolerans (strain WP3 / JCM 13877), this protein is Transcriptional repressor NrdR.